The primary structure comprises 381 residues: 5-cytosine rRNA methyltransferase NSUN4 (381 aa).

Residues Met-1–Tyr-25 constitute a mitochondrion transit peptide. S-adenosyl-L-methionine is bound by residues Gly-182, Gly-183, Lys-184, and Asp-201. Residue Ser-203 is modified to Phosphoserine. The S-adenosyl-L-methionine site is built by Arg-206, Asp-234, Gly-235, and Asp-252. Cys-307 functions as the Nucleophile in the catalytic mechanism.

The protein belongs to the class I-like SAM-binding methyltransferase superfamily. RsmB/NOP family. Heterodimer with MTERFD2/MTERF4; this interaction seems to be required for NSUN4 recruitment to the mitochondrial large ribosomal subunit.

It is found in the mitochondrion. It catalyses the reaction a cytidine in rRNA + S-adenosyl-L-methionine = a 5-methylcytidine in rRNA + S-adenosyl-L-homocysteine + H(+). It carries out the reaction a cytidine in mRNA + S-adenosyl-L-methionine = a 5-methylcytidine in mRNA + S-adenosyl-L-homocysteine + H(+). Functionally, mitochondrial RNA cytosine C(5)-methyltransferase that methylates cytosine to 5-methylcytosine (m5C) in various RNAs, such as rRNAs, mRNAs and some long non-coding RNAs (lncRNAs). Involved in mitochondrial ribosome small subunit (SSU) maturation by catalyzing methylation of mitochondrial 12S rRNA; the function is independent of MTERFD2/MTERF4 and assembled mitochondrial ribosome large subunit (LSU). Targeted to LSU by MTERFD2/MTERF4 and probably is involved in a final step in ribosome biogenesis to ensure that SSU and LSU are assembled. In vitro can methylate 16S rRNA of the LSU; the methylation is enhanced by MTERFD/MTERF4. Also acts as a regulator of innate immunity by marking double-stranded mitochondrial RNAs(mt-dsRNAs) generated in response to stress: catalyzes m5C modification on mitochondrial RNAs, such as a mRNAs and lncRNAs, with a preference for the termini of light-strand lncRNAs, promoting their degradation and cytosolic release. Modified light-strand lncRNAs are then recognized by C1QBP reader and recruited to the mitochondrial degradosome complex, which promotes their degradation. This chain is 5-cytosine rRNA methyltransferase NSUN4, found in Mus musculus (Mouse).